Reading from the N-terminus, the 518-residue chain is ATP synthase subunit alpha (518 aa).

ATP is bound at residue Gly169–Thr176.

It belongs to the ATPase alpha/beta chains family. As to quaternary structure, F-type ATPases have 2 components, CF(1) - the catalytic core - and CF(0) - the membrane proton channel. CF(1) has five subunits: alpha(3), beta(3), gamma(1), delta(1), epsilon(1). CF(0) has three main subunits: a(1), b(2) and c(9-12). The alpha and beta chains form an alternating ring which encloses part of the gamma chain. CF(1) is attached to CF(0) by a central stalk formed by the gamma and epsilon chains, while a peripheral stalk is formed by the delta and b chains.

The protein localises to the cell membrane. The enzyme catalyses ATP + H2O + 4 H(+)(in) = ADP + phosphate + 5 H(+)(out). Functionally, produces ATP from ADP in the presence of a proton gradient across the membrane. The alpha chain is a regulatory subunit. The protein is ATP synthase subunit alpha of Mycoplasma pneumoniae (strain ATCC 29342 / M129 / Subtype 1) (Mycoplasmoides pneumoniae).